The primary structure comprises 468 residues: MIHKPLPRPPSSTAYIDGLRGILSIIIFNAHLTPIIILGYDNLSPPQPSPSPRNVLDIPLVASCVNNWELFTIPIVKLVYSASPAVCLFFAISGYVMSLKWVRYMSHSPTSTTTPARVFTSFGSSIFRRTLRLNLLAMASMIVPFVLVKTGFFDRTVVQRHGLTKLDRGMRFWLEQWEQFPVRRESWWEQICDLGENCARVVTVFVQRRDEAFSPRYNPVLWTIKADLRASLALSVTHLAMLGISRRSRQCFLAALVVMGIAVGSLECPLFWAGWIVAEIHHPAEQRTLKQRKSAEMPMQKTSRRGPDPFGKAVVLAIGCYFASYPTWKPEKAPMFTVLHTIVPDVVVPPRTWHSIGAILILYSLRDVPLARRVCESSIAQFLGTHSFAVYLVHFCLVISFGPGLFSWAWGVSGYEDLRSFAIGFGIAYAVLFIGVLLAAAMFHQFVEKPANKCVERLYRLSSVEQDV.

Transmembrane regions (helical) follow at residues 21–41 (GILSIIIFNAHLTPIIILGYD), 70–90 (LFTIPIVKLVYSASPAVCLFF), 133–153 (LNLLAMASMIVPFVLVKTGFF), 252–272 (FLAALVVMGIAVGSLECPLFW), 308–328 (DPFGKAVVLAIGCYFASYPTW), 388–408 (FAVYLVHFCLVISFGPGLFSW), and 423–443 (IGFGIAYAVLFIGVLLAAAMF).

Belongs to the acyltransferase 3 family.

Its subcellular location is the membrane. The protein operates within secondary metabolite biosynthesis. Acyltransferase; part of the gene cluster that mediates the biosynthesis of squalestatin S1 (SQS1, also known as zaragozic acid A), a heavily oxidized fungal polyketide that offers potent cholesterol lowering activity by targeting squalene synthase (SS). SQS1 is composed of a 2,8-dioxobicyclic[3.2.1]octane-3,4,5-tricarboxyclic acid core that is connected to two lipophilic polyketide arms. These initial steps feature the priming of an unusual benzoic acid starter unit onto the highly reducing polyketide synthase pks2, followed by oxaloacetate extension and product release to generate a tricarboxylic acid containing product. The phenylalanine ammonia lyase (PAL) M7 and the acyl-CoA ligase M9 are involved in transforming phenylalanine into benzoyl-CoA. The citrate synthase-like protein R3 is involved in connecting the C-alpha-carbons of the hexaketide chain and oxaloacetate to afford the tricarboxylic acid unit. The potential hydrolytic enzymes, M8 and M10, are in close proximity to pks2 and may participate in product release. On the other side, the tetraketide arm is synthesized by a the squalestatin tetraketide synthase pks1 and enzymatically esterified to the core in the last biosynthetic step, by the acetyltransferase M4. The biosynthesis of the tetraketide must involve 3 rounds of chain extension. After the first and second rounds methyl-transfer occurs, and in all rounds of extension the ketoreductase and dehydratase are active. The enoyl reductase and C-MeT of pks1 are not active in the final round of extension. The acetyltransferase M4 appears to have a broad substrate selectivity for its acyl CoA substrate, allowing the in vitro synthesis of novel squalestatins. The biosynthesis of SQS1 requires several oxidative steps likely performed by oxidoreductases M1, R1 and R2. Finally, in support of the identification of the cluster as being responsible for SQS1 production, the cluster contains a gene encoding a putative squalene synthase (SS) R6, suggesting a likely mechanism for self-resistance. The chain is Acyltransferase R4 from Phoma sp. (strain ATCC 20986 / MF5453).